A 207-amino-acid chain; its full sequence is MLNKLSRLLADAGISLTDHQKTLLAAYVDMLHKWNKAYNLTSVRDPNEMLVRHILDSIVVAPYLQGQRFIDVGTGPGLPGIPLAIVLPDAHFTLLDSLGKRVRFLRQVQHELKLENITPVQSRVEAYPSEPPFDGVISRAFASLNDMVSWCHHLPGEKGRFYALKGQLPGDEIASLPDNFSVESVEKLRVPQLEGERHLVIIKSNKV.

Residues glycine 73, leucine 78, 124–125 (VE), and arginine 139 each bind S-adenosyl-L-methionine.

It belongs to the methyltransferase superfamily. RNA methyltransferase RsmG family.

Its subcellular location is the cytoplasm. It carries out the reaction guanosine(527) in 16S rRNA + S-adenosyl-L-methionine = N(7)-methylguanosine(527) in 16S rRNA + S-adenosyl-L-homocysteine. Functionally, specifically methylates the N7 position of guanine in position 527 of 16S rRNA. This Salmonella agona (strain SL483) protein is Ribosomal RNA small subunit methyltransferase G.